The following is a 647-amino-acid chain: Putative lipase YDL109C (647 aa).

Ser274 serves as the catalytic Charge relay system. The tract at residues 502 to 523 (PPPSPTLYEGTAAKEGETRKTR) is disordered. Residues 513 to 523 (AAKEGETRKTR) show a composition bias toward basic and acidic residues.

Belongs to the putative lipase ROG1 family.

Its function is as follows. Involved in lipid metabolism. The chain is Putative lipase YDL109C from Saccharomyces cerevisiae (strain ATCC 204508 / S288c) (Baker's yeast).